Reading from the N-terminus, the 171-residue chain is Large ribosomal subunit protein uL22 (171 aa).

It belongs to the universal ribosomal protein uL22 family.

In Zea mays (Maize), this protein is Large ribosomal subunit protein uL22 (RPL17).